The primary structure comprises 254 residues: Probable transcriptional regulator ycf27 (254 aa).

One can recognise a Response regulatory domain in the interval 16 to 129; sequence KVLIVDDEAS…ELEARIRAVL (114 aa). D65 carries the 4-aspartylphosphate modification. A DNA-binding region (H-T-H motif) is located at residues 85 to 103; that stretch reads DVPIIMLTALGDVADRITG. A DNA-binding region (ompR/PhoB-type) is located at residues 144–245; that stretch reads SGIINFNFLT…ARGTGYLFQR (102 aa).

The protein resides in the plastid. It is found in the chloroplast. Its function is as follows. Probable promoter-specific protein mediating the interaction between DNA and RNA polymerase. This is Probable transcriptional regulator ycf27 (ycf27) from Guillardia theta (Cryptophyte).